A 334-amino-acid chain; its full sequence is Histo-blood group ABO system transferase 2 (334 aa).

At 1-15 the chain is on the cytoplasmic side; the sequence is MKDLRFGRLKCYSLH. The helical; Signal-anchor for type II membrane protein transmembrane segment at 16 to 36 threads the bilayer; it reads LGILPLTVLVLVFFCFVCLSL. Residues 37-334 lie on the Lumenal side of the membrane; it reads RSQEWGHPGA…VPKNHQAIRN (298 aa). N94 carries N-linked (GlcNAc...) asparagine glycosylation. Residues 102 to 104, Y107, and 192 to 194 each bind UDP-N-acetyl-alpha-D-galactosamine; these read FAV and DVD. Mn(2+)-binding residues include D192 and D194. H214, T226, E284, and D307 together coordinate an alpha-L-fucosyl-(1-&gt;2)-beta-D-galactosyl derivative. E284 serves as the catalytic Nucleophile.

Belongs to the glycosyltransferase 6 family. Mn(2+) is required as a cofactor. Large intestine, caecum, stomach, pancreas, submaxillary gland and kidney (at protein level). Ubiquitous.

Its subcellular location is the golgi apparatus. It is found in the golgi stack membrane. It localises to the secreted. The catalysed reaction is an alpha-L-fucosyl-(1-&gt;2)-beta-D-galactosyl derivative + UDP-N-acetyl-alpha-D-galactosamine = an N-acetyl-alpha-D-galactosaminyl-(1-&gt;3)-[alpha-L-fucosyl-(1-&gt;2)]-beta-D-galactosyl derivative + UDP + H(+). It catalyses the reaction an alpha-L-fucosyl-(1-&gt;2)-beta-D-galactosyl derivative + UDP-alpha-D-galactose = an alpha-D-galactosyl-(1-&gt;3)-[alpha-L-fucosyl-(1-&gt;2)]-beta-D-galactosyl derivative + UDP + H(+). It functions in the pathway protein modification; protein glycosylation. Functionally, possesses strong B transferase activity and weak A transferase activity. This chain is Histo-blood group ABO system transferase 2 (Abo2), found in Rattus norvegicus (Rat).